Reading from the N-terminus, the 327-residue chain is Ferrochelatase (327 aa).

Fe cation-binding residues include histidine 196 and glutamate 277.

This sequence belongs to the ferrochelatase family.

The protein localises to the cytoplasm. The enzyme catalyses heme b + 2 H(+) = protoporphyrin IX + Fe(2+). The protein operates within porphyrin-containing compound metabolism; protoheme biosynthesis; protoheme from protoporphyrin-IX: step 1/1. Catalyzes the ferrous insertion into protoporphyrin IX. The chain is Ferrochelatase from Gloeobacter violaceus (strain ATCC 29082 / PCC 7421).